Here is a 59-residue protein sequence, read N- to C-terminus: MAKTIKVTQTRSSIARLPKHKATLKGLGLRHIRHTVELIDTPAVRGMINQVSYMVKVEE.

The protein belongs to the universal ribosomal protein uL30 family. Part of the 50S ribosomal subunit.

This chain is Large ribosomal subunit protein uL30, found in Actinobacillus pleuropneumoniae serotype 7 (strain AP76).